The chain runs to 200 residues: Pyridoxal 5'-phosphate synthase subunit PdxT (200 aa).

52 to 54 contributes to the L-glutamine binding site; that stretch reads GES. The Nucleophile role is filled by Cys-84. L-glutamine contacts are provided by residues Arg-116 and 145–146; that span reads IR. Residues His-181 and Glu-183 each act as charge relay system in the active site.

The protein belongs to the glutaminase PdxT/SNO family. In the presence of PdxS, forms a dodecamer of heterodimers. Only shows activity in the heterodimer.

It catalyses the reaction aldehydo-D-ribose 5-phosphate + D-glyceraldehyde 3-phosphate + L-glutamine = pyridoxal 5'-phosphate + L-glutamate + phosphate + 3 H2O + H(+). It carries out the reaction L-glutamine + H2O = L-glutamate + NH4(+). It participates in cofactor biosynthesis; pyridoxal 5'-phosphate biosynthesis. Its function is as follows. Catalyzes the hydrolysis of glutamine to glutamate and ammonia as part of the biosynthesis of pyridoxal 5'-phosphate. The resulting ammonia molecule is channeled to the active site of PdxS. In Saccharolobus islandicus (strain Y.G.57.14 / Yellowstone #1) (Sulfolobus islandicus), this protein is Pyridoxal 5'-phosphate synthase subunit PdxT.